The chain runs to 418 residues: Gamma-glutamyl phosphate reductase (418 aa).

Belongs to the gamma-glutamyl phosphate reductase family.

The protein localises to the cytoplasm. It carries out the reaction L-glutamate 5-semialdehyde + phosphate + NADP(+) = L-glutamyl 5-phosphate + NADPH + H(+). It participates in amino-acid biosynthesis; L-proline biosynthesis; L-glutamate 5-semialdehyde from L-glutamate: step 2/2. Catalyzes the NADPH-dependent reduction of L-glutamate 5-phosphate into L-glutamate 5-semialdehyde and phosphate. The product spontaneously undergoes cyclization to form 1-pyrroline-5-carboxylate. The protein is Gamma-glutamyl phosphate reductase of Marinobacter nauticus (strain ATCC 700491 / DSM 11845 / VT8) (Marinobacter aquaeolei).